The sequence spans 153 residues: MSSFKSQCEIIIDKPAHVVYDFVTTVSNWIGIHPACKGIEGDDGLDKEATVGLRFTETIDVRGWVFQCHWEVRKMVKDQYFEFSLPTDFILPPVYNTIITYIFDPIGDNKTRFIRTMINCTNADATPEQKADFADTDMHTDYLNAVKARLEMS.

Its pathway is secondary metabolite biosynthesis. Functionally, part of the gene cluster that mediates the biosynthesis of the indole diterpenes penitrems. The geranylgeranyl diphosphate (GGPP) synthase ptmG catalyzes the first step in penitrem biosynthesis via conversion of farnesyl pyrophosphate and isopentyl pyrophosphate into geranylgeranyl pyrophosphate (GGPP). Condensation of indole-3-glycerol phosphate with GGPP by the prenyl transferase ptmC then forms 3-geranylgeranylindole (3-GGI). Epoxidation by the FAD-dependent monooxygenase ptmM leads to a epoxidized-GGI that is substrate of the terpene cyclase ptmB for cyclization to yield paspaline. Paspaline is subsequently converted to 13-desoxypaxilline by the cytochrome P450 monooxygenase ptmP, the latter being then converted to paxilline by the cytochrome P450 monooxygenase ptmQ. Paxilline is converted to beta-paxitriol via C-10 ketoreduction by the short-chain dehydrogenase ptmH which can be monoprenylated at the C-20 by the indole diterpene prenyltransferase ptmD. A two-step elimination (acetylation and elimination) process performed by the O-acetyltransferase ptmV and ptmI leads to the production of the prenylated form of penijanthine. The FAD-linked oxidoreductase ptmO then converts the prenylated form of penijanthine into PC-M5 which is in turn transformed into PC-M4 by the aromatic dimethylallyltransferase ptmE. Five sequential oxidative transformations performed by the cytochrome P450 monooxygenases ptmK, ptmU, ptmL, ptmN and ptmJ yield the various penitrem compounds. PtmK, ptmU and ptmM are involved in the formation of the key bicyclic ring of penitrem C via the formation of the intermediates secopenitrem D and penitrem D. PtmL catalyzes the epoxidation of penitrem D and C to yield penitrem B and F, respectively. PtmJ catalyzes the last benzylic hydroxylation to convert penitrem B to prenitrem E and penitrem F to penitrem A. In Penicillium ochrochloron, this protein is Penitrem biosynthesis cluster 1 protein I.